A 431-amino-acid chain; its full sequence is Adenylosuccinate synthetase (431 aa).

GTP contacts are provided by residues 13–19 (GDEGKGK) and 41–43 (GHT). The active-site Proton acceptor is the Asp14. Mg(2+) contacts are provided by Asp14 and Gly41. IMP-binding positions include 14 to 17 (DEGK), 39 to 42 (NAGH), Thr130, Arg144, Gln225, Thr240, and Arg304. His42 serves as the catalytic Proton donor. 300–306 (TTTGRSR) provides a ligand contact to substrate. Residues Arg306, 332 to 334 (KLD), and 414 to 416 (STG) each bind GTP.

The protein belongs to the adenylosuccinate synthetase family. In terms of assembly, homodimer. Mg(2+) is required as a cofactor.

The protein resides in the cytoplasm. It carries out the reaction IMP + L-aspartate + GTP = N(6)-(1,2-dicarboxyethyl)-AMP + GDP + phosphate + 2 H(+). Its pathway is purine metabolism; AMP biosynthesis via de novo pathway; AMP from IMP: step 1/2. In terms of biological role, plays an important role in the de novo pathway of purine nucleotide biosynthesis. Catalyzes the first committed step in the biosynthesis of AMP from IMP. The protein is Adenylosuccinate synthetase of Marinobacter nauticus (strain ATCC 700491 / DSM 11845 / VT8) (Marinobacter aquaeolei).